Consider the following 111-residue polypeptide: Ribonuclease P protein component (111 aa).

The protein belongs to the RnpA family. In terms of assembly, consists of a catalytic RNA component (M1 or rnpB) and a protein subunit.

The catalysed reaction is Endonucleolytic cleavage of RNA, removing 5'-extranucleotides from tRNA precursor.. In terms of biological role, RNaseP catalyzes the removal of the 5'-leader sequence from pre-tRNA to produce the mature 5'-terminus. It can also cleave other RNA substrates such as 4.5S RNA. The protein component plays an auxiliary but essential role in vivo by binding to the 5'-leader sequence and broadening the substrate specificity of the ribozyme. The protein is Ribonuclease P protein component of Borreliella afzelii (strain PKo) (Borrelia afzelii).